A 294-amino-acid polypeptide reads, in one-letter code: Protease HtpX homolog (294 aa).

Helical transmembrane passes span Val12 to Phe32 and Ser34 to Trp54. Residue His138 coordinates Zn(2+). Glu139 is a catalytic residue. His142 provides a ligand contact to Zn(2+). Transmembrane regions (helical) follow at residues Ser152–Gly172 and Leu188–Ile208. Glu213 is a Zn(2+) binding site.

It belongs to the peptidase M48B family. Zn(2+) serves as cofactor.

The protein resides in the cell membrane. The chain is Protease HtpX homolog from Kineococcus radiotolerans (strain ATCC BAA-149 / DSM 14245 / SRS30216).